We begin with the raw amino-acid sequence, 434 residues long: Angio-associated migratory cell protein (434 aa).

The disordered stretch occupies residues 1-63; sequence MESESESGAA…EEEEEEGNEE (63 aa). The residue at position 20 (S20) is a Phosphoserine. Residues 39–62 are compositionally biased toward acidic residues; it reads DPDDLAQEMEDVDFEEEEEEEGNE. 8 WD repeats span residues 89–129, 132–171, 173–212, 214–254, 258–299, 315–354, 356–395, and 398–433; these read LHSA…LLFE, GHKD…EVWS, EAGD…KTFQ, PNCP…HVLK, GHQG…GVFR, SESN…LRHQ, QHQS…LLTD, and GHTA…QRPD.

It is found in the cell membrane. Its subcellular location is the cytoplasm. In terms of biological role, plays a role in angiogenesis and cell migration. In smooth muscle cell migration, may act through the RhoA pathway. The protein is Angio-associated migratory cell protein (AAMP) of Pongo abelii (Sumatran orangutan).